The following is a 96-amino-acid chain: Small ribosomal subunit protein bS18 (96 aa).

This sequence belongs to the bacterial ribosomal protein bS18 family. In terms of assembly, part of the 30S ribosomal subunit. Forms a tight heterodimer with protein bS6.

Binds as a heterodimer with protein bS6 to the central domain of the 16S rRNA, where it helps stabilize the platform of the 30S subunit. This Borrelia garinii subsp. bavariensis (strain ATCC BAA-2496 / DSM 23469 / PBi) (Borreliella bavariensis) protein is Small ribosomal subunit protein bS18.